The chain runs to 386 residues: Succinate--CoA ligase [ADP-forming] subunit beta (386 aa).

An ATP-grasp domain is found at 9-244 (KELLRDYGVP…LNEEDEKEIE (236 aa)). ATP-binding positions include K46, 53-55 (GRG), E99, C102, and E107. Residues N199 and D213 each contribute to the Mg(2+) site. Substrate contacts are provided by residues N264 and 321–323 (GIM).

Belongs to the succinate/malate CoA ligase beta subunit family. Heterotetramer of two alpha and two beta subunits. Mg(2+) serves as cofactor.

The catalysed reaction is succinate + ATP + CoA = succinyl-CoA + ADP + phosphate. The enzyme catalyses GTP + succinate + CoA = succinyl-CoA + GDP + phosphate. It functions in the pathway carbohydrate metabolism; tricarboxylic acid cycle; succinate from succinyl-CoA (ligase route): step 1/1. In terms of biological role, succinyl-CoA synthetase functions in the citric acid cycle (TCA), coupling the hydrolysis of succinyl-CoA to the synthesis of either ATP or GTP and thus represents the only step of substrate-level phosphorylation in the TCA. The beta subunit provides nucleotide specificity of the enzyme and binds the substrate succinate, while the binding sites for coenzyme A and phosphate are found in the alpha subunit. This Alkaliphilus oremlandii (strain OhILAs) (Clostridium oremlandii (strain OhILAs)) protein is Succinate--CoA ligase [ADP-forming] subunit beta.